The primary structure comprises 105 residues: uncharacterized protein (105 aa).

It to C.jejuni CJ1463.

This is an uncharacterized protein from Helicobacter pylori (strain ATCC 700392 / 26695) (Campylobacter pylori).